The following is a 343-amino-acid chain: GDSL esterase/lipase EXL4 (343 aa).

The N-terminal stretch at methionine 1–alanine 21 is a signal peptide. An N-linked (GlcNAc...) asparagine glycan is attached at asparagine 23. The active-site Nucleophile is serine 35. Residues aspartate 318 and histidine 321 contribute to the active site.

Belongs to the 'GDSL' lipolytic enzyme family. Flower buds and pollen.

It localises to the secreted. It is found in the extracellular space. The protein resides in the extracellular matrix. The protein localises to the pollen coat. Its function is as follows. Required for the formation of pollen coats and male fertility. The sequence is that of GDSL esterase/lipase EXL4 (EXL4) from Arabidopsis thaliana (Mouse-ear cress).